The primary structure comprises 451 residues: 3-phosphoshikimate 1-carboxyvinyltransferase (451 aa).

3-phosphoshikimate is bound by residues K30, S31, and R35. Residue K30 coordinates phosphoenolpyruvate. Phosphoenolpyruvate-binding residues include G101 and R130. S176, S177, Q178, D321, and K348 together coordinate 3-phosphoshikimate. Q178 serves as a coordination point for phosphoenolpyruvate. Residue D321 is the Proton acceptor of the active site. Positions 352 and 422 each coordinate phosphoenolpyruvate.

It belongs to the EPSP synthase family. As to quaternary structure, monomer.

It is found in the cytoplasm. The catalysed reaction is 3-phosphoshikimate + phosphoenolpyruvate = 5-O-(1-carboxyvinyl)-3-phosphoshikimate + phosphate. Its pathway is metabolic intermediate biosynthesis; chorismate biosynthesis; chorismate from D-erythrose 4-phosphate and phosphoenolpyruvate: step 6/7. Functionally, catalyzes the transfer of the enolpyruvyl moiety of phosphoenolpyruvate (PEP) to the 5-hydroxyl of shikimate-3-phosphate (S3P) to produce enolpyruvyl shikimate-3-phosphate and inorganic phosphate. This chain is 3-phosphoshikimate 1-carboxyvinyltransferase, found in Burkholderia pseudomallei (strain K96243).